The following is a 442-amino-acid chain: Terpene cyclase aneC (442 aa).

Positions 196, 327, 331, and 335 each coordinate Mg(2+). The (2E,6E)-farnesyl diphosphate site is built by Arg-419 and Tyr-420.

It belongs to the terpene synthase family. In terms of assembly, homodimer. Mg(2+) serves as cofactor.

It carries out the reaction (2E,6E)-farnesyl diphosphate = dauca-4,7-diene + diphosphate. It participates in secondary metabolite biosynthesis. In terms of biological role, terpene cyclase; part of the gene cluster that mediates the biosynthesis of aculenes, a unique type of norsesquiterpenes that contain a nordaucane skeleton linked to an L-proline moiety and are of mixed biosynthetic origin. The pathway begins with the synthesis of dauca-4,7-diene by the terpene cyclase aneC using farnesyl pyrophosphate (FPP) as substrate. The cytochrome P450 monooxygenase aneF then performs the initial oxidation at C-12 of dauca-4,7-diene to yield asperaculane D. Asperaculane D is substrate of the cytochrome P450 monooxygenase aneD for C-10 hydroxylation to yield asperaculane E. The cytochrome P450 monooxygenase aneG then converts asperaculane E into aculene D via C-2 oxidation. The monomodular nonribosomal peptide synthtase aneB adenylates L-proline and the thiohydrolase aneE transfers this activated L-proline derivative to aculenes D and C to produce respectively aculenes B and A. The dioxygenase aneA converts aculene D into aculene C, and aculene B into aculene A by introducing the 5,6-alkene moiety. Asperculanes A, B, C and F, as well as 14-prolyl asperculane C, might be shunt products of the pathway. In Aspergillus aculeatus (strain ATCC 16872 / CBS 172.66 / WB 5094), this protein is Terpene cyclase aneC.